Here is a 185-residue protein sequence, read N- to C-terminus: Ribosome-recycling factor (185 aa).

This sequence belongs to the RRF family.

It is found in the cytoplasm. Functionally, responsible for the release of ribosomes from messenger RNA at the termination of protein biosynthesis. May increase the efficiency of translation by recycling ribosomes from one round of translation to another. The chain is Ribosome-recycling factor from Thermus thermophilus (strain ATCC BAA-163 / DSM 7039 / HB27).